The chain runs to 496 residues: Probable G-protein coupled receptor Mth-like 5 (496 aa).

The Extracellular portion of the chain corresponds to 1-219 (MLVKTLGAHF…SNFLLRKILN (219 aa)). Asn-82 carries an N-linked (GlcNAc...) asparagine glycan. Residues 220–240 (PIFHGISLVILLVIAIIYFIL) traverse the membrane as a helical segment. Over 241–246 (PTLRDL) the chain is Cytoplasmic. A helical transmembrane segment spans residues 247 to 267 (VGNIVTTIAMCLMVSQAADLV). Topologically, residues 268-276 (RIFTELTSH) are extracellular. Residues 277-297 (VSFIVADIILCFSLLAAFFWL) traverse the membrane as a helical segment. Over 298–327 (NSFGFYIWKTFRSRNVFLRVTDGRKYCYYS) the chain is Cytoplasmic. A helical transmembrane segment spans residues 328–348 (AYAWGCTATMAALAVFAHFFL). Over 349-366 (DAESYKQEHMVGEQETIG) the chain is Extracellular. A helical membrane pass occupies residues 367-387 (WLGICIFFAPIACTILVNIFF). The Cytoplasmic segment spans residues 388–411 (YVTTRKLINRRTVYGRIAHKLKAN). Residues 412–432 (FIMFSLMLLVMSIAWLFLIMS) traverse the membrane as a helical segment. Topologically, residues 433–438 (WLQMEG) are extracellular. A helical membrane pass occupies residues 439–459 (LLYAHIVVNALQTPLLLYICV). Topologically, residues 460-496 (LRQRHVTFLLKKTCCYNEPPSANDWGDELHYMNGNDY) are cytoplasmic.

Belongs to the G-protein coupled receptor 2 family. Mth subfamily.

It localises to the cell membrane. This Drosophila melanogaster (Fruit fly) protein is Probable G-protein coupled receptor Mth-like 5 (mthl5).